A 221-amino-acid chain; its full sequence is Large ribosomal subunit protein uL3 (221 aa).

The protein belongs to the universal ribosomal protein uL3 family. In terms of assembly, part of the 50S ribosomal subunit. Forms a cluster with proteins L14 and L19.

In terms of biological role, one of the primary rRNA binding proteins, it binds directly near the 3'-end of the 23S rRNA, where it nucleates assembly of the 50S subunit. The chain is Large ribosomal subunit protein uL3 from Chlamydia muridarum (strain MoPn / Nigg).